The following is a 296-amino-acid chain: Probable endonuclease 4 (296 aa).

Zn(2+) contacts are provided by histidine 68, histidine 109, glutamate 144, aspartate 178, histidine 181, histidine 213, aspartate 226, histidine 228, and glutamate 258.

The protein belongs to the AP endonuclease 2 family. Zn(2+) is required as a cofactor.

It catalyses the reaction Endonucleolytic cleavage to 5'-phosphooligonucleotide end-products.. Its function is as follows. Endonuclease IV plays a role in DNA repair. It cleaves phosphodiester bonds at apurinic or apyrimidinic (AP) sites, generating a 3'-hydroxyl group and a 5'-terminal sugar phosphate. The sequence is that of Probable endonuclease 4 from Staphylococcus carnosus (strain TM300).